The following is a 184-amino-acid chain: Threonylcarbamoyl-AMP synthase (184 aa).

In terms of domain architecture, YrdC-like spans 3–184 (AWFIQKAVSV…DAATGAILRQ (182 aa)).

This sequence belongs to the SUA5 family. TsaC subfamily.

The protein localises to the cytoplasm. The catalysed reaction is L-threonine + hydrogencarbonate + ATP = L-threonylcarbamoyladenylate + diphosphate + H2O. Required for the formation of a threonylcarbamoyl group on adenosine at position 37 (t(6)A37) in tRNAs that read codons beginning with adenine. Catalyzes the conversion of L-threonine, HCO(3)(-)/CO(2) and ATP to give threonylcarbamoyl-AMP (TC-AMP) as the acyladenylate intermediate, with the release of diphosphate. This chain is Threonylcarbamoyl-AMP synthase, found in Hahella chejuensis (strain KCTC 2396).